The following is a 41-amino-acid chain: Large ribosomal subunit protein bL36 (41 aa).

This sequence belongs to the bacterial ribosomal protein bL36 family.

This is Large ribosomal subunit protein bL36 from Rickettsia africae (strain ESF-5).